The following is a 269-amino-acid chain: Putative aga operon transcriptional repressor (269 aa).

In terms of domain architecture, HTH deoR-type spans 15-70 (TSERREQIIQRLRQQGSVQVNDLSALYGVSTVTIRNDLAFLEKQGIAVRAYGGALI). Positions 32–51 (VQVNDLSALYGVSTVTIRND) form a DNA-binding region, H-T-H motif.

Probable repressor for the aga operon for N-acetyl galactosamine transport and metabolism. The polypeptide is Putative aga operon transcriptional repressor (agaR) (Escherichia coli O157:H7).